Here is a 243-residue protein sequence, read N- to C-terminus: Phosphoribosyl isomerase A (243 aa).

D9 functions as the Proton acceptor in the catalytic mechanism. The Proton donor role is filled by D128.

Belongs to the HisA/HisF family.

It localises to the cytoplasm. It catalyses the reaction 1-(5-phospho-beta-D-ribosyl)-5-[(5-phospho-beta-D-ribosylamino)methylideneamino]imidazole-4-carboxamide = 5-[(5-phospho-1-deoxy-D-ribulos-1-ylimino)methylamino]-1-(5-phospho-beta-D-ribosyl)imidazole-4-carboxamide. It carries out the reaction N-(5-phospho-beta-D-ribosyl)anthranilate = 1-(2-carboxyphenylamino)-1-deoxy-D-ribulose 5-phosphate. The protein operates within amino-acid biosynthesis; L-histidine biosynthesis; L-histidine from 5-phospho-alpha-D-ribose 1-diphosphate: step 4/9. Its pathway is amino-acid biosynthesis; L-tryptophan biosynthesis; L-tryptophan from chorismate: step 3/5. In terms of biological role, involved in both the histidine and tryptophan biosynthetic pathways. The sequence is that of Phosphoribosyl isomerase A from Mycobacterium avium (strain 104).